A 198-amino-acid chain; its full sequence is V-type proton ATPase subunit E (198 aa).

The protein belongs to the V-ATPase E subunit family.

Produces ATP from ADP in the presence of a proton gradient across the membrane. The sequence is that of V-type proton ATPase subunit E from Borrelia hermsii (strain HS1 / DAH).